Here is a 183-residue protein sequence, read N- to C-terminus: Probable chemoreceptor glutamine deamidase CheD (183 aa).

It belongs to the CheD family.

The catalysed reaction is L-glutaminyl-[protein] + H2O = L-glutamyl-[protein] + NH4(+). Its function is as follows. Probably deamidates glutamine residues to glutamate on methyl-accepting chemotaxis receptors (MCPs), playing an important role in chemotaxis. This chain is Probable chemoreceptor glutamine deamidase CheD, found in Rhizobium meliloti (strain 1021) (Ensifer meliloti).